A 168-amino-acid polypeptide reads, in one-letter code: Photosystem I assembly protein Ycf3 (168 aa).

TPR repeat units lie at residues 35 to 68 (AFTY…EIDP), 72 to 105 (SYIL…NPFL), and 120 to 153 (GEQA…TPGN).

This sequence belongs to the Ycf3 family.

The protein localises to the plastid. The protein resides in the chloroplast thylakoid membrane. Its function is as follows. Essential for the assembly of the photosystem I (PSI) complex. May act as a chaperone-like factor to guide the assembly of the PSI subunits. The polypeptide is Photosystem I assembly protein Ycf3 (Chloranthus spicatus (Chulantree)).